The primary structure comprises 444 residues: UDP-N-acetylmuramate--L-alanine ligase (444 aa).

111–117 provides a ligand contact to ATP; the sequence is GAHGKTS.

It belongs to the MurCDEF family.

It is found in the cytoplasm. It carries out the reaction UDP-N-acetyl-alpha-D-muramate + L-alanine + ATP = UDP-N-acetyl-alpha-D-muramoyl-L-alanine + ADP + phosphate + H(+). The protein operates within cell wall biogenesis; peptidoglycan biosynthesis. Functionally, cell wall formation. This chain is UDP-N-acetylmuramate--L-alanine ligase, found in Leuconostoc mesenteroides subsp. mesenteroides (strain ATCC 8293 / DSM 20343 / BCRC 11652 / CCM 1803 / JCM 6124 / NCDO 523 / NBRC 100496 / NCIMB 8023 / NCTC 12954 / NRRL B-1118 / 37Y).